Reading from the N-terminus, the 273-residue chain is 2-dehydro-3-deoxyphosphooctonate aldolase (273 aa).

Belongs to the KdsA family.

The protein localises to the cytoplasm. The enzyme catalyses D-arabinose 5-phosphate + phosphoenolpyruvate + H2O = 3-deoxy-alpha-D-manno-2-octulosonate-8-phosphate + phosphate. It participates in carbohydrate biosynthesis; 3-deoxy-D-manno-octulosonate biosynthesis; 3-deoxy-D-manno-octulosonate from D-ribulose 5-phosphate: step 2/3. Its pathway is bacterial outer membrane biogenesis; lipopolysaccharide biosynthesis. The polypeptide is 2-dehydro-3-deoxyphosphooctonate aldolase (Desulfatibacillum aliphaticivorans).